Reading from the N-terminus, the 141-residue chain is Large ribosomal subunit protein uL23A (141 aa).

Serine 68 and serine 70 each carry phosphoserine.

The protein belongs to the universal ribosomal protein uL23 family. Component of the large ribosomal subunit (LSU). Mature yeast ribosomes consist of a small (40S) and a large (60S) subunit. The 40S small subunit contains 1 molecule of ribosomal RNA (18S rRNA) and at least 33 different proteins. The large 60S subunit contains 3 rRNA molecules (25S, 5.8S and 5S rRNA) and at least 46 different proteins. uL23 is associated with the polypeptide exit tunnel.

It localises to the cytoplasm. Its function is as follows. This protein binds to a specific region on the 26S rRNA. Functionally, component of the ribosome, a large ribonucleoprotein complex responsible for the synthesis of proteins in the cell. The small ribosomal subunit (SSU) binds messenger RNAs (mRNAs) and translates the encoded message by selecting cognate aminoacyl-transfer RNA (tRNA) molecules. The large subunit (LSU) contains the ribosomal catalytic site termed the peptidyl transferase center (PTC), which catalyzes the formation of peptide bonds, thereby polymerizing the amino acids delivered by tRNAs into a polypeptide chain. The nascent polypeptides leave the ribosome through a tunnel in the LSU and interact with protein factors that function in enzymatic processing, targeting, and the membrane insertion of nascent chains at the exit of the ribosomal tunnel. uL23 is a major component of the universal docking site for these factors at the polypeptide exit tunnel. The polypeptide is Large ribosomal subunit protein uL23A (rpl2501) (Schizosaccharomyces pombe (strain 972 / ATCC 24843) (Fission yeast)).